The primary structure comprises 443 residues: Zinc finger protein 713 (443 aa).

The span at 1–10 shows a compositional bias: polar residues; that stretch reads MPSQNAVFSQ. Disordered stretches follow at residues 1–23 and 99–118; these read MPSQ…NDGS and DTHP…TSQN. The KRAB domain occupies 32–102; sequence LTFQDVAVDF…ERDSLLDTHP (71 aa). Positions 99–112 are enriched in basic and acidic residues; the sequence is DTHPDGENRPEIKK. A C2H2-type 1; degenerate zinc finger spans residues 255-280; it reads HTAEKPSECGKAFSHTSSLSQPQMLL. 5 C2H2-type zinc fingers span residues 286–308, 314–336, 342–364, 370–392, and 398–420; these read YKCD…QRIH, FICN…LRIH, YKCN…HRLH, YECG…ERTH, and YKCN…RKIH.

Belongs to the krueppel C2H2-type zinc-finger protein family. As to expression, expressed in fetal and adult brain.

The protein resides in the nucleus. In terms of biological role, may be involved in transcriptional regulation. This chain is Zinc finger protein 713, found in Homo sapiens (Human).